Consider the following 218-residue polypeptide: Outer-membrane lipoprotein LolB (218 aa).

A signal peptide spans 1–24; that stretch reads MNNLSYLTKIPLIWVLLSVTLLSA. A lipid anchor (N-palmitoyl cysteine) is attached at Cys-25. Cys-25 carries S-diacylglycerol cysteine lipidation.

The protein belongs to the LolB family. Monomer.

The protein localises to the cell outer membrane. Functionally, plays a critical role in the incorporation of lipoproteins in the outer membrane after they are released by the LolA protein. The sequence is that of Outer-membrane lipoprotein LolB from Shewanella sediminis (strain HAW-EB3).